Reading from the N-terminus, the 690-residue chain is Translation initiation factor IF-2 (690 aa).

Residues 178–346 (PRPPVVTVMG…MILLVAEMNE (169 aa)) enclose the tr-type G domain. The tract at residues 187-194 (GHVDHGKT) is G1. 187–194 (GHVDHGKT) provides a ligand contact to GTP. A G2 region spans residues 212–216 (GITQS). The interval 233 to 236 (DTPG) is G3. GTP is bound by residues 233 to 237 (DTPGH) and 287 to 290 (NKID). A G4 region spans residues 287 to 290 (NKID). Residues 324–326 (SAR) are G5.

Belongs to the TRAFAC class translation factor GTPase superfamily. Classic translation factor GTPase family. IF-2 subfamily.

It localises to the cytoplasm. Functionally, one of the essential components for the initiation of protein synthesis. Protects formylmethionyl-tRNA from spontaneous hydrolysis and promotes its binding to the 30S ribosomal subunits. Also involved in the hydrolysis of GTP during the formation of the 70S ribosomal complex. The protein is Translation initiation factor IF-2 of Thermotoga sp. (strain RQ2).